A 605-amino-acid chain; its full sequence is Elongation factor 4 (605 aa).

In terms of domain architecture, tr-type G spans 9 to 192 (GMIRNFCIIA…AIVQRIPAPA (184 aa)). GTP contacts are provided by residues 21–26 (DHGKST) and 139–142 (NKID).

It belongs to the TRAFAC class translation factor GTPase superfamily. Classic translation factor GTPase family. LepA subfamily.

It localises to the cell inner membrane. It catalyses the reaction GTP + H2O = GDP + phosphate + H(+). Functionally, required for accurate and efficient protein synthesis under certain stress conditions. May act as a fidelity factor of the translation reaction, by catalyzing a one-codon backward translocation of tRNAs on improperly translocated ribosomes. Back-translocation proceeds from a post-translocation (POST) complex to a pre-translocation (PRE) complex, thus giving elongation factor G a second chance to translocate the tRNAs correctly. Binds to ribosomes in a GTP-dependent manner. In Chlorobaculum parvum (strain DSM 263 / NCIMB 8327) (Chlorobium vibrioforme subsp. thiosulfatophilum), this protein is Elongation factor 4.